Reading from the N-terminus, the 409-residue chain is Elongation factor Tu (409 aa).

Positions 10 to 214 (KPHVNIGTIG…EVDAYIPTPE (205 aa)) constitute a tr-type G domain. The segment at 19–26 (GHVDHGKT) is G1. Position 19–26 (19–26 (GHVDHGKT)) interacts with GTP. T26 contributes to the Mg(2+) binding site. Residues 60–64 (GITIN) are G2. Residues 81-84 (DCPG) form a G3 region. GTP-binding positions include 81-85 (DCPGH) and 136-139 (NKQD). Residues 136–139 (NKQD) are G4. Residues 174 to 176 (SAL) form a G5 region.

It belongs to the TRAFAC class translation factor GTPase superfamily. Classic translation factor GTPase family. EF-Tu/EF-1A subfamily. Monomer.

The protein localises to the cytoplasm. The enzyme catalyses GTP + H2O = GDP + phosphate + H(+). Its function is as follows. GTP hydrolase that promotes the GTP-dependent binding of aminoacyl-tRNA to the A-site of ribosomes during protein biosynthesis. The chain is Elongation factor Tu from Acaryochloris marina (strain MBIC 11017).